Here is a 292-residue protein sequence, read N- to C-terminus: Homoserine kinase (292 aa).

84–94 (PLARGMGSSSA) is an ATP binding site.

The protein belongs to the GHMP kinase family. Homoserine kinase subfamily.

The protein localises to the cytoplasm. The catalysed reaction is L-homoserine + ATP = O-phospho-L-homoserine + ADP + H(+). The protein operates within amino-acid biosynthesis; L-threonine biosynthesis; L-threonine from L-aspartate: step 4/5. In terms of biological role, catalyzes the ATP-dependent phosphorylation of L-homoserine to L-homoserine phosphate. This chain is Homoserine kinase, found in Thermus thermophilus (strain ATCC BAA-163 / DSM 7039 / HB27).